We begin with the raw amino-acid sequence, 183 residues long: Ribosome maturation factor RimM (183 aa).

One can recognise a PRC barrel domain in the interval 103–183 (EEGDYYWKDL…SIEVDWDPGF (81 aa)).

The protein belongs to the RimM family. In terms of assembly, binds ribosomal protein uS19.

The protein resides in the cytoplasm. Its function is as follows. An accessory protein needed during the final step in the assembly of 30S ribosomal subunit, possibly for assembly of the head region. Essential for efficient processing of 16S rRNA. May be needed both before and after RbfA during the maturation of 16S rRNA. It has affinity for free ribosomal 30S subunits but not for 70S ribosomes. The chain is Ribosome maturation factor RimM from Escherichia coli O157:H7 (strain EC4115 / EHEC).